The following is a 254-amino-acid chain: 4-hydroxy-tetrahydrodipicolinate reductase (254 aa).

8 to 13 (GAFGRM) is an NAD(+) binding site. Residue Lys36 participates in NADP(+) binding. NAD(+) contacts are provided by residues 89-91 (GTT) and 115-118 (STNY). His147 acts as the Proton donor/acceptor in catalysis. His148 lines the (S)-2,3,4,5-tetrahydrodipicolinate pocket. The Proton donor role is filled by Lys151. A (S)-2,3,4,5-tetrahydrodipicolinate-binding site is contributed by 157–158 (GT).

Belongs to the DapB family.

It localises to the cytoplasm. The enzyme catalyses (S)-2,3,4,5-tetrahydrodipicolinate + NAD(+) + H2O = (2S,4S)-4-hydroxy-2,3,4,5-tetrahydrodipicolinate + NADH + H(+). It carries out the reaction (S)-2,3,4,5-tetrahydrodipicolinate + NADP(+) + H2O = (2S,4S)-4-hydroxy-2,3,4,5-tetrahydrodipicolinate + NADPH + H(+). It participates in amino-acid biosynthesis; L-lysine biosynthesis via DAP pathway; (S)-tetrahydrodipicolinate from L-aspartate: step 4/4. In terms of biological role, catalyzes the conversion of 4-hydroxy-tetrahydrodipicolinate (HTPA) to tetrahydrodipicolinate. In Methanospirillum hungatei JF-1 (strain ATCC 27890 / DSM 864 / NBRC 100397 / JF-1), this protein is 4-hydroxy-tetrahydrodipicolinate reductase.